A 92-amino-acid chain; its full sequence is Small ribosomal subunit protein uS19c (92 aa).

Belongs to the universal ribosomal protein uS19 family.

It is found in the plastid. Its function is as follows. Protein S19 forms a complex with S13 that binds strongly to the 16S ribosomal RNA. The protein is Small ribosomal subunit protein uS19c of Cuscuta exaltata (Tall dodder).